We begin with the raw amino-acid sequence, 401 residues long: Methionine import ATP-binding protein MetN (401 aa).

The 243-residue stretch at 6 to 248 folds into the ABC transporter domain; sequence ITFDHVVKEF…PQQPVTKRFI (243 aa). ATP is bound at residue 45–52; it reads GYSGAGKS.

Belongs to the ABC transporter superfamily. Methionine importer (TC 3.A.1.24) family. The complex is composed of two ATP-binding proteins (MetN), two transmembrane proteins (MetI) and a solute-binding protein (MetQ).

It localises to the cell membrane. The catalysed reaction is L-methionine(out) + ATP + H2O = L-methionine(in) + ADP + phosphate + H(+). It catalyses the reaction D-methionine(out) + ATP + H2O = D-methionine(in) + ADP + phosphate + H(+). Its function is as follows. Part of the ABC transporter complex MetNIQ involved in methionine import. Responsible for energy coupling to the transport system. This Bifidobacterium longum (strain NCC 2705) protein is Methionine import ATP-binding protein MetN.